Here is a 66-residue protein sequence, read N- to C-terminus: UPF0337 protein M6_Spy1542 (66 aa).

The span at methionine 1–valine 10 shows a compositional bias: basic and acidic residues. The interval methionine 1–glycine 22 is disordered.

It belongs to the UPF0337 (CsbD) family.

This Streptococcus pyogenes serotype M6 (strain ATCC BAA-946 / MGAS10394) protein is UPF0337 protein M6_Spy1542.